A 609-amino-acid chain; its full sequence is UvrABC system protein C (609 aa).

One can recognise a GIY-YIG domain in the interval S16–V94. One can recognise a UVR domain in the interval Q203–V238.

This sequence belongs to the UvrC family. Interacts with UvrB in an incision complex.

The protein resides in the cytoplasm. Its function is as follows. The UvrABC repair system catalyzes the recognition and processing of DNA lesions. UvrC both incises the 5' and 3' sides of the lesion. The N-terminal half is responsible for the 3' incision and the C-terminal half is responsible for the 5' incision. The protein is UvrABC system protein C of Shewanella baltica (strain OS185).